The chain runs to 471 residues: ATP synthase subunit beta 1 (471 aa).

Position 157-164 (157-164) interacts with ATP; sequence GGAGVGKT.

It belongs to the ATPase alpha/beta chains family. In terms of assembly, F-type ATPases have 2 components, CF(1) - the catalytic core - and CF(0) - the membrane proton channel. CF(1) has five subunits: alpha(3), beta(3), gamma(1), delta(1), epsilon(1). CF(0) has three main subunits: a(1), b(2) and c(9-12). The alpha and beta chains form an alternating ring which encloses part of the gamma chain. CF(1) is attached to CF(0) by a central stalk formed by the gamma and epsilon chains, while a peripheral stalk is formed by the delta and b chains.

Its subcellular location is the cell inner membrane. It carries out the reaction ATP + H2O + 4 H(+)(in) = ADP + phosphate + 5 H(+)(out). Functionally, produces ATP from ADP in the presence of a proton gradient across the membrane. The catalytic sites are hosted primarily by the beta subunits. This chain is ATP synthase subunit beta 1, found in Pelobacter propionicus (strain DSM 2379 / NBRC 103807 / OttBd1).